Consider the following 227-residue polypeptide: Ornithine decarboxylase antizyme 1 (227 aa).

This sequence belongs to the ODC antizyme family. As to quaternary structure, interacts with ODC1 and thereby sterically blocks ODC homodimerization. Forms a ternary complex with PSMB4 and OAZ1 before PSMB4 is incorporated into the 20S proteasome. Interacts with AZIN2; this interaction disrupts the interaction between the antizyme and ODC1. Interacts with FAM171A1.

Ornithine decarboxylase (ODC) antizyme protein that negatively regulates ODC activity and intracellular polyamine biosynthesis and uptake in response to increased intracellular polyamine levels. Binds to ODC monomers, inhibiting the assembly of the functional ODC homodimer, and targets the monomers for ubiquitin-independent proteolytic destruction by the 26S proteasome. Triggers ODC degradation by inducing the exposure of a cryptic proteasome-interacting surface of ODC. Stabilizes AZIN2 by interfering with its ubiquitination. Also inhibits cellular uptake of polyamines by inactivating the polyamine uptake transporter. SMAD1/OAZ1/PSMB4 complex mediates the degradation of the CREBBP/EP300 repressor SNIP1. Involved in the translocation of AZIN2 from ER-Golgi intermediate compartment (ERGIC) to the cytosol. The chain is Ornithine decarboxylase antizyme 1 (Oaz1) from Rattus norvegicus (Rat).